A 110-amino-acid polypeptide reads, in one-letter code: Lichenan-specific phosphotransferase enzyme IIA component (110 aa).

In terms of domain architecture, PTS EIIA type-3 spans 3-101 (EEMEQIIFQI…AAEIIELYEK (99 aa)). The active-site Tele-phosphohistidine intermediate; by HPr is His-77.

The protein resides in the cytoplasm. Its function is as follows. The phosphoenolpyruvate-dependent sugar phosphotransferase system (PTS), a major carbohydrate active -transport system, catalyzes the phosphorylation of incoming sugar substrates concomitant with their translocation across the cell membrane. This system is involved in lichenan transport. In Bacillus subtilis (strain 168), this protein is Lichenan-specific phosphotransferase enzyme IIA component (licA).